The primary structure comprises 82 residues: MAFTLYALIQTAILFTNAIAVLHEERFLSKIGWGAEQGVGGFGDDPGIKAQLLNLIRSVRTVMRVPLIAVNSVCIVLLLLFG.

The next 2 helical transmembrane spans lie at 2 to 22 (AFTL…IAVL) and 62 to 82 (VMRV…LLFG).

This sequence belongs to the YOS1 family.

It is found in the endoplasmic reticulum membrane. Regulator of endoplasmic reticulum secretion that acts as a key determinant of brain size. Required for secretion of extracellular matrix proteins. Required for correct brain development by depositing sufficient extracellular matrix proteins for tissue integrity and the proliferation of neural progenitors. Acts as a regulator of the unfolded protein response (UPR). This chain is Immediate early response 3-interacting protein 1, found in Danio rerio (Zebrafish).